A 305-amino-acid polypeptide reads, in one-letter code: uncharacterized protein (305 aa).

This is an uncharacterized protein from Streptomyces griseus.